Reading from the N-terminus, the 274-residue chain is Dehydration-responsive element-binding protein 2A (274 aa).

Composition is skewed to basic and acidic residues over residues 1 to 10 and 35 to 50; these read MERGEGRRGD and KWWK…ENSS. Positions 1-75 are disordered; it reads MERGEGRRGD…KGGPENSNCA (75 aa). The AP2/ERF DNA-binding region spans 75 to 132; the sequence is AYRGVRQRTWGKWVAEIREPNRGRRLWLGSFPTALEAAHAYDEAARAMYGPTARVNFA.

Belongs to the AP2/ERF transcription factor family. ERF subfamily.

It is found in the nucleus. Transcriptional activator that binds specifically to the DNA sequence 5'-[AG]CCGAC-3'. Binding to the C-repeat/DRE element mediates high salinity- and dehydration-inducible transcription. This is Dehydration-responsive element-binding protein 2A (DREB2A) from Oryza sativa subsp. indica (Rice).